The following is a 389-amino-acid chain: Chalcone synthase 1 (389 aa).

Cysteine 164 is a catalytic residue.

This sequence belongs to the thiolase-like superfamily. Chalcone/stilbene synthases family.

It carries out the reaction (E)-4-coumaroyl-CoA + 3 malonyl-CoA + 3 H(+) = 2',4,4',6'-tetrahydroxychalcone + 3 CO2 + 4 CoA. It participates in secondary metabolite biosynthesis; flavonoid biosynthesis. In terms of biological role, the primary product of this enzyme is 4,2',4',6'-tetrahydroxychalcone (also termed naringenin-chalcone or chalcone) which can under specific conditions spontaneously isomerize into naringenin. This chain is Chalcone synthase 1 (CHS1), found in Pisum sativum (Garden pea).